Consider the following 370-residue polypeptide: Protein SHI RELATED SEQUENCE 1 (370 aa).

A disordered region spans residues 1–37 (MAGFFSLDGGGGGGGGGGNNQEDHRSNTNPPPPVSEA). Positions 8 to 19 (DGGGGGGGGGGN) are enriched in gly residues. Zn(2+) contacts are provided by C144, C147, C155, C160, C164, and C171. The zn(2)-C6 fungal-type; degenerate DNA-binding region spans 144–171 (CQDCGNQAKKDCSHMRCRTCCKSRGFEC). A Required for homo- and heterodimerization motif is present at residues 271 to 274 (IGGH).

It belongs to the SHI protein family. In terms of assembly, forms homodimers and heterodimers with LRP1. In terms of tissue distribution, expressed in flowers, seeds and seedlings.

The protein resides in the nucleus. Its function is as follows. Transcription activator that binds DNA on 5'-ACTCTAC-3' and promotes auxin homeostasis-regulating gene expression (e.g. YUC genes), as well as genes affecting stamen development, cell expansion and timing of flowering. Synergistically with other SHI-related proteins, regulates gynoecium, stamen and leaf development in a dose-dependent manner, controlling apical-basal patterning. Promotes style and stigma formation, and influences vascular development during gynoecium development. May also have a role in the formation and/or maintenance of the shoot apical meristem (SAM). The chain is Protein SHI RELATED SEQUENCE 1 (SRS1) from Arabidopsis thaliana (Mouse-ear cress).